The following is a 284-amino-acid chain: Tropomyosin (284 aa).

A coiled-coil region spans residues M1–Y284. Composition is skewed to basic and acidic residues over residues L29–E42 and A111–A136. Disordered stretches follow at residues L29 to R49 and A111 to K149.

This sequence belongs to the tropomyosin family.

In terms of biological role, tropomyosin, in association with the troponin complex, plays a central role in the calcium dependent regulation of muscle contraction. This Clonorchis sinensis (Chinese liver fluke) protein is Tropomyosin.